The sequence spans 154 residues: Flagellar assembly factor FliW (154 aa).

It belongs to the FliW family. In terms of assembly, interacts with translational regulator CsrA and flagellin(s).

The protein resides in the cytoplasm. Functionally, acts as an anti-CsrA protein, binds CsrA and prevents it from repressing translation of its target genes, one of which is flagellin. Binds to flagellin and participates in the assembly of the flagellum. This Carboxydothermus hydrogenoformans (strain ATCC BAA-161 / DSM 6008 / Z-2901) protein is Flagellar assembly factor FliW.